The sequence spans 271 residues: 3-methyl-2-oxobutanoate hydroxymethyltransferase (271 aa).

Asp-51 and Asp-90 together coordinate Mg(2+). 3-methyl-2-oxobutanoate contacts are provided by residues 51-52 (DS), Asp-90, and Lys-118. A Mg(2+)-binding site is contributed by Glu-120. Glu-186 (proton acceptor) is an active-site residue.

It belongs to the PanB family. Homodecamer; pentamer of dimers. It depends on Mg(2+) as a cofactor.

It is found in the cytoplasm. The enzyme catalyses 3-methyl-2-oxobutanoate + (6R)-5,10-methylene-5,6,7,8-tetrahydrofolate + H2O = 2-dehydropantoate + (6S)-5,6,7,8-tetrahydrofolate. It functions in the pathway cofactor biosynthesis; (R)-pantothenate biosynthesis; (R)-pantoate from 3-methyl-2-oxobutanoate: step 1/2. Catalyzes the reversible reaction in which hydroxymethyl group from 5,10-methylenetetrahydrofolate is transferred onto alpha-ketoisovalerate to form ketopantoate. This chain is 3-methyl-2-oxobutanoate hydroxymethyltransferase, found in Xanthomonas axonopodis pv. citri (strain 306).